Here is a 369-residue protein sequence, read N- to C-terminus: 1-aminocyclopropane-1-carboxylate oxidase homolog 3 (369 aa).

The region spanning 217–318 (KGLLMLSHYY…VSVACFFTTG (102 aa)) is the Fe2OG dioxygenase domain. His-241, Asp-243, and His-297 together coordinate Fe cation.

The protein belongs to the iron/ascorbate-dependent oxidoreductase family. The cofactor is Fe cation.

The polypeptide is 1-aminocyclopropane-1-carboxylate oxidase homolog 3 (Arabidopsis thaliana (Mouse-ear cress)).